We begin with the raw amino-acid sequence, 558 residues long: Two-component response regulator-like APRR5 (558 aa).

Residues 51–169 enclose the Response regulatory domain; it reads RVLLVEADDS…ELRNLWQHVW (119 aa). Residues 180–233 form a disordered region; that stretch reads FPWNESVGQQKAEGASANNSNGKRDDHVVSGNGGDAQSSCTRPEMEGESADVEV. A coiled-coil region spans residues 240 to 260; sequence QMECAKSQFNETRLLANELQS. Disordered stretches follow at residues 297–319 and 535–558; these read SLRR…HPSS and KKLA…TQAP. Residues 303–319 are compositionally biased toward polar residues; the sequence is ASENQSSGDRPSLHPSS. A CCT domain is found at 509 to 551; sequence REAALTKFRMKRKDRCYEKKVRYESRKKLAEQRPRIKGQFVRQ.

Belongs to the ARR-like family. In terms of assembly, interacts with ADO1 and ADO2. Interacts with SPY (via N-terminus). Post-translationally, phosphorylation varies throughout the diurnal cycle and enhances ADO1 binding. O-fucosylated by SPY. O-fucosylation promotes APRR5 proteolysis.

The protein localises to the nucleus. Transcriptional repressor of CCA1 and LHY, thereby controlling photoperiodic flowering response. Involved in the positive and negative feedback loops of the circadian clock. With RVE8, forms a negative feedback loop of the circadian clock. Expression of several members of the ARR-like family is controlled by circadian rhythm. Proteolytic substrate of the E3 ubiquitin ligase SCF(ADO1) complex. APRR9, APRR7, and APRR5 coordinately act on the upstream region of the target genes to repress their expression from noon until midnight. The particular coordinated sequential expression of APRR9, APRR7, APRR5, APRR3 and APPR1 result to circadian waves that may be at the basis of the endogenous circadian clock. Negative regulator of shade avoidance response. Involved in the inhibition of leaf expansion in shade avoidance response. This chain is Two-component response regulator-like APRR5 (APRR5), found in Arabidopsis thaliana (Mouse-ear cress).